Consider the following 1263-residue polypeptide: MKEISCGRRTRVSFGKSREPLPIPDLVEIQKSSYRRFLEEGLLEVLKKFSPIYSQATRSDLRKSDRGFALEFVSTRTGEPAIDPLECKAKGLTYSVPIYATARLTDMKSGEMKEEEVFLGYIPYMTDRGTFIINGAERVVVNQIVVSPGLYFSSEYIDREEYGGYFLPSRGAWLEVILDPYDGVLYAGLDGKKVNLFLFLKTIGYEKDEDILSLYPTYLDADDEDSLLLHVGSILLEDIYDGGRKIAEKWDILTKDLAERILMIDDINQIKIVHPIAQNTFEKMLEVVSSSSEEGEEEEEKTKIYGLNEVTVVDAYLEIFRRLRPEELPRINAAKRYLHDLFFNPERYDLSEVGRYKVNERLRNAYIRYLIEVEGEDPEEARKKVYNETSLVLKPLDIVLASRILFDYFERRYVNDFEIDSYELKNLIRIFKEEYLEKRKTAPYDLRKLVSVFRRNYGVTSDLGVFAAIRYVSNINKELPSIPFDTKDHLGNKRVRTVGELVQREFERLFARAQKAIQERLTLINSLSKVSIQSLINIKSIISTVNQFFAMNQLSQFMDQVNPLSELTHKRRVSAVGPGGLRRESKVFEARNVHYSQYGRLCPIETPEGANIGFITSLAIYAKIDEYGFLMTPYRKVVNGKVTDEVVYLRANEEEEYKIIPATTPVDEEGNIIPERVVARMGEDIRLVPKEEVDFMDVSTKQPFSVSASLIPFLEHDDASRALMGSNMQRQAVPLLKTEAPLVGTGMEWEAAKNSGYVILAEHDGIVKEVDAARVVVHRTDENGNLMYDDKGNPVVDEYRLLKFVRSNQDTMINQKPIVNEGDFVKKGDPIADGPATDMGELALGRNILVAFMPWEGYNYEDAILVSQELLEEDVFTSIHIEVYETQARETRLGPEEITADIPNVSKELLKNLDENGIIRVGAYVVSDYGVGSQAILVGKVTPKGEGDTTPEEKIIRSVFGERGRDVKDTSLRLPHGVEGRVIRVDVYDQNDIAELGAGVLKLVRVYVASRKTLDIGDKLAGRHGNKGVVSNILPKEDMPFLPDGTPVQMVLNPLGIPSRMNVGQILETHLGWLAKLTGKWFATPVFEGAKEDEILRPLYEERKKRGLHLGDDENNPNGKVVLRDGRTGEPFDNPVVVGYMYMLKLIHIAKEKIHARSTGPYSLIHQQPLGGKSHFGGQRLGEMEVWALEAYGAAHTLAEMLTIKSDDIKGRNEAYKAILKNMNIPEPGVPESFRVLIKELRGLALDVRLYDENGNEIDIDKY.

It belongs to the RNA polymerase beta chain family. As to quaternary structure, the RNAP catalytic core consists of 2 alpha, 1 beta, 1 beta' and 1 omega subunit. When a sigma factor is associated with the core the holoenzyme is formed, which can initiate transcription.

It catalyses the reaction RNA(n) + a ribonucleoside 5'-triphosphate = RNA(n+1) + diphosphate. DNA-dependent RNA polymerase catalyzes the transcription of DNA into RNA using the four ribonucleoside triphosphates as substrates. The sequence is that of DNA-directed RNA polymerase subunit beta from Thermotoga maritima (strain ATCC 43589 / DSM 3109 / JCM 10099 / NBRC 100826 / MSB8).